The chain runs to 924 residues: Aminopeptidase 2 (924 aa).

The first 45 residues, M1–L45, serve as a signal peptide directing secretion. The propeptide occupies L46–L57. The residue at position 58 (S58) is an N-acetylserine; partial. N92 is a glycosylation site (N-linked (GlcNAc...) asparagine). Residue E194 participates in substrate binding. The N-linked (GlcNAc...) asparagine glycan is linked to N229. G327–N331 is a substrate binding site. Position 363 (H363) interacts with Zn(2+). E364 (proton acceptor) is an active-site residue. Residues H367 and E386 each contribute to the Zn(2+) site.

This sequence belongs to the peptidase M1 family. Zn(2+) serves as cofactor.

It localises to the secreted. The protein resides in the cell wall. Its activity is regulated as follows. Inactivated by metal-chelating agents phenanthroline and EDTA. Inhibited by bestatin, an aminopeptidase inhibitor. Not inhibited by pepstatin A and PMSF, inhibitors of aspartic and the serine proteases, respectively. Not inhibited by carboxypeptidase inhibitor. Metalloprotease that specifically hydrolyzes peptides with N-terminal alanine, arginine and leucine residues. The chain is Aminopeptidase 2 (APE2) from Candida albicans (strain SC5314 / ATCC MYA-2876) (Yeast).